A 212-amino-acid polypeptide reads, in one-letter code: Thymidylate kinase (212 aa).

11 to 18 provides a ligand contact to ATP; it reads GPEGAGKT.

This sequence belongs to the thymidylate kinase family.

The catalysed reaction is dTMP + ATP = dTDP + ADP. Phosphorylation of dTMP to form dTDP in both de novo and salvage pathways of dTTP synthesis. The protein is Thymidylate kinase of Streptococcus pneumoniae (strain Taiwan19F-14).